Here is a 224-residue protein sequence, read N- to C-terminus: Ribose-5-phosphate isomerase A (224 aa).

Residues 34-37, 87-90, and 100-103 contribute to the substrate site; these read TGST, DGAD, and KGGG. The active-site Proton acceptor is the glutamate 109. Lysine 127 contacts substrate.

Belongs to the ribose 5-phosphate isomerase family. Homodimer.

The catalysed reaction is aldehydo-D-ribose 5-phosphate = D-ribulose 5-phosphate. It functions in the pathway carbohydrate degradation; pentose phosphate pathway; D-ribose 5-phosphate from D-ribulose 5-phosphate (non-oxidative stage): step 1/1. In terms of biological role, catalyzes the reversible conversion of ribose-5-phosphate to ribulose 5-phosphate. The protein is Ribose-5-phosphate isomerase A of Francisella tularensis subsp. tularensis (strain FSC 198).